Here is a 983-residue protein sequence, read N- to C-terminus: Receptor-like protein 19 (983 aa).

The signal sequence occupies residues 1–25 (MMKGYITLSFLIILIFNFLDEFAAS). Residues 26–937 (TRHLCDPDQS…EEDEEEVISW (912 aa)) lie on the Extracellular side of the membrane. N66 and N102 each carry an N-linked (GlcNAc...) asparagine glycan. LRR repeat units lie at residues 82–108 (FGDV…LFRL), 111–135 (LRFL…LETL), 136–159 (SNLT…IGNL), 161–183 (HLIF…LGYL), 184–207 (SHLT…IGNL), 209–231 (YLTT…LGSL), 232–255 (FHLT…LGNL), 256–281 (SHLT…NLSC), 283–302 (TSFI…SFGN), 303–327 (LNQL…LLNL), 328–351 (RKLS…MSSL), 353–375 (NLKL…LFNI), 376–399 (PSLK…NISS), 401–424 (SNLT…ISKL), 425–448 (VNLK…IFSH), 450–474 (KSIE…ILSS), 475–498 (FKLL…SLSN), 501–524 (LVLI…LRSQ), 525–548 (ELML…LWML), 550–571 (VLNY…TKLG), 578–602 (PPAM…ICEL), 603–628 (PYLS…NIQS), 629–652 (PYLQ…IFES), 654–674 (ISLD…LSHI), 675–700 (SSLG…SLQE), 702–720 (QVLV…KTQF), 721–744 (SKLR…FFVN), 793–817 (LKVF…IGLL), 818–840 (KELH…SMGN), 841–865 (LMAL…LGKL), and 867–890 (YLAY…QFQT). 6 N-linked (GlcNAc...) asparagine glycosylation sites follow: N137, N158, N171, N190, N195, and N206. N254 and N278 each carry an N-linked (GlcNAc...) asparagine glycan. N-linked (GlcNAc...) asparagine glycosylation occurs at N347. 3 N-linked (GlcNAc...) asparagine glycosylation sites follow: N389, N396, and N402. N-linked (GlcNAc...) asparagine glycans are attached at residues N456, N461, N492, and N498. 4 N-linked (GlcNAc...) asparagine glycosylation sites follow: N555, N558, N590, and N616. N-linked (GlcNAc...) asparagine glycosylation is found at N734 and N744. An N-linked (GlcNAc...) asparagine glycan is attached at N824. N872 carries N-linked (GlcNAc...) asparagine glycosylation. A helical transmembrane segment spans residues 938–958 (IAAVIGFILGTALGLTFGCIL). Residues 959 to 983 (FSYKPDWFKNPFVRDKRRNIGTITH) are Cytoplasmic-facing.

Belongs to the RLP family.

It is found in the cell membrane. In Arabidopsis thaliana (Mouse-ear cress), this protein is Receptor-like protein 19.